Consider the following 91-residue polypeptide: UPF0147 protein DKAM_0139 (91 aa).

The protein belongs to the UPF0147 family.

This is UPF0147 protein DKAM_0139 from Desulfurococcus amylolyticus (strain DSM 18924 / JCM 16383 / VKM B-2413 / 1221n) (Desulfurococcus kamchatkensis).